We begin with the raw amino-acid sequence, 365 residues long: Probable dual-specificity RNA methyltransferase RlmN (365 aa).

E106 serves as the catalytic Proton acceptor. The Radical SAM core domain occupies 112–352 (YPDRVTLCVS…VTVRDTRGRE (241 aa)). An intrachain disulfide couples C119 to C357. 3 residues coordinate [4Fe-4S] cluster: C126, C130, and C133. S-adenosyl-L-methionine is bound by residues 181-182 (GE), S215, 238-240 (SLH), and N314. C357 serves as the catalytic S-methylcysteine intermediate.

The protein belongs to the radical SAM superfamily. RlmN family. [4Fe-4S] cluster serves as cofactor.

The protein resides in the cytoplasm. The catalysed reaction is adenosine(2503) in 23S rRNA + 2 reduced [2Fe-2S]-[ferredoxin] + 2 S-adenosyl-L-methionine = 2-methyladenosine(2503) in 23S rRNA + 5'-deoxyadenosine + L-methionine + 2 oxidized [2Fe-2S]-[ferredoxin] + S-adenosyl-L-homocysteine. It carries out the reaction adenosine(37) in tRNA + 2 reduced [2Fe-2S]-[ferredoxin] + 2 S-adenosyl-L-methionine = 2-methyladenosine(37) in tRNA + 5'-deoxyadenosine + L-methionine + 2 oxidized [2Fe-2S]-[ferredoxin] + S-adenosyl-L-homocysteine. Specifically methylates position 2 of adenine 2503 in 23S rRNA and position 2 of adenine 37 in tRNAs. The protein is Probable dual-specificity RNA methyltransferase RlmN of Thermobifida fusca (strain YX).